Here is a 663-residue protein sequence, read N- to C-terminus: UvrABC system protein B (663 aa).

Over residues 1-10 (MIDKRDDKPF) the composition is skewed to basic and acidic residues. The interval 1–23 (MIDKRDDKPFKLKSKYKPSGDQP) is disordered. The Helicase ATP-binding domain maps to 31 to 271 (DNIEGGEKAQ…EQSIAKIQAE (241 aa)). Residue 44–51 (GATGTGKT) coordinates ATP. The Beta-hairpin motif lies at 97 to 120 (YYDYYQPEAYVPSSDTYIEKDSSV). The 167-residue stretch at 435 to 601 (QMDDLLGEIN…TIKKDIRGLI (167 aa)) folds into the Helicase C-terminal domain. Positions 627–662 (KEAINALQKQMQEAAELLDFELAAQMRDLILELKLM) constitute a UVR domain.

Belongs to the UvrB family. As to quaternary structure, forms a heterotetramer with UvrA during the search for lesions. Interacts with UvrC in an incision complex.

The protein localises to the cytoplasm. In terms of biological role, the UvrABC repair system catalyzes the recognition and processing of DNA lesions. A damage recognition complex composed of 2 UvrA and 2 UvrB subunits scans DNA for abnormalities. Upon binding of the UvrA(2)B(2) complex to a putative damaged site, the DNA wraps around one UvrB monomer. DNA wrap is dependent on ATP binding by UvrB and probably causes local melting of the DNA helix, facilitating insertion of UvrB beta-hairpin between the DNA strands. Then UvrB probes one DNA strand for the presence of a lesion. If a lesion is found the UvrA subunits dissociate and the UvrB-DNA preincision complex is formed. This complex is subsequently bound by UvrC and the second UvrB is released. If no lesion is found, the DNA wraps around the other UvrB subunit that will check the other stand for damage. The sequence is that of UvrABC system protein B from Streptococcus pyogenes serotype M4 (strain MGAS10750).